The chain runs to 529 residues: Bifunctional purine biosynthesis protein PurH (529 aa).

The MGS-like domain occupies 1 to 148; that stretch reads MQQHRPVRRA…KNHKDVAIVV (148 aa).

It belongs to the PurH family.

It carries out the reaction (6R)-10-formyltetrahydrofolate + 5-amino-1-(5-phospho-beta-D-ribosyl)imidazole-4-carboxamide = 5-formamido-1-(5-phospho-D-ribosyl)imidazole-4-carboxamide + (6S)-5,6,7,8-tetrahydrofolate. The catalysed reaction is IMP + H2O = 5-formamido-1-(5-phospho-D-ribosyl)imidazole-4-carboxamide. Its pathway is purine metabolism; IMP biosynthesis via de novo pathway; 5-formamido-1-(5-phospho-D-ribosyl)imidazole-4-carboxamide from 5-amino-1-(5-phospho-D-ribosyl)imidazole-4-carboxamide (10-formyl THF route): step 1/1. It functions in the pathway purine metabolism; IMP biosynthesis via de novo pathway; IMP from 5-formamido-1-(5-phospho-D-ribosyl)imidazole-4-carboxamide: step 1/1. The polypeptide is Bifunctional purine biosynthesis protein PurH (Erwinia tasmaniensis (strain DSM 17950 / CFBP 7177 / CIP 109463 / NCPPB 4357 / Et1/99)).